The chain runs to 137 residues: Large ribosomal subunit protein uL16 (137 aa).

Residues 1–16 are compositionally biased toward basic residues; sequence MLQPKRTKFRKVHTGR. The interval 1–22 is disordered; sequence MLQPKRTKFRKVHTGRNRGLAQ.

It belongs to the universal ribosomal protein uL16 family. In terms of assembly, part of the 50S ribosomal subunit.

In terms of biological role, binds 23S rRNA and is also seen to make contacts with the A and possibly P site tRNAs. The sequence is that of Large ribosomal subunit protein uL16 from Idiomarina loihiensis (strain ATCC BAA-735 / DSM 15497 / L2-TR).